Consider the following 302-residue polypeptide: tRNA dimethylallyltransferase (302 aa).

12 to 19 (GPTASGKS) contacts ATP. 14 to 19 (TASGKS) is a binding site for substrate. Residues 37 to 40 (DSMQ) are interaction with substrate tRNA.

Belongs to the IPP transferase family. In terms of assembly, monomer. Mg(2+) is required as a cofactor.

The catalysed reaction is adenosine(37) in tRNA + dimethylallyl diphosphate = N(6)-dimethylallyladenosine(37) in tRNA + diphosphate. Its function is as follows. Catalyzes the transfer of a dimethylallyl group onto the adenine at position 37 in tRNAs that read codons beginning with uridine, leading to the formation of N6-(dimethylallyl)adenosine (i(6)A). In Corynebacterium diphtheriae (strain ATCC 700971 / NCTC 13129 / Biotype gravis), this protein is tRNA dimethylallyltransferase.